The sequence spans 375 residues: MLNFKLLKTDGNARRGQLTLNHGVIETPIFMPVGTYGSVKAMSPLELNEIDAQIILGNTFHLWLRPGNDIIAKFGGLHEFMGWNKPILTDSGGFQVFSLGEMRKITEEGVHFSSPINGDKLFLSPEVSMQIQRVLNSDIVMQFDECTPYEIDGRPATTEEAAKSMRMSLRWAKRSMDEFNREENPNALFGIVQGGMFENLRDESLAGLEELNFHGVAIGGLSVGEPKEDMMRVLEHVGPRLPANKPHYLMGVGTPEDLVAGVASGIDMFDCVMPTRNARNGWLFTRFGDIKIKNARYKDDKKPLDESCSCYACRNFSRAYLHHLHRTGEILGARLNTIHNLHYYLDLMREMREAISEGRFQLFVSQFHADRARGS.

The Proton acceptor role is filled by Asp-90. Substrate is bound by residues 90 to 94, Asp-144, Gln-193, and Gly-220; that span reads DSGGF. Residues 251 to 257 are RNA binding; the sequence is GVGTPED. Catalysis depends on Asp-270, which acts as the Nucleophile. Positions 275–279 are RNA binding; important for wobble base 34 recognition; that stretch reads TRNAR. Zn(2+)-binding residues include Cys-308, Cys-310, Cys-313, and His-339.

Belongs to the queuine tRNA-ribosyltransferase family. Homodimer. Within each dimer, one monomer is responsible for RNA recognition and catalysis, while the other monomer binds to the replacement base PreQ1. The cofactor is Zn(2+).

The catalysed reaction is 7-aminomethyl-7-carbaguanine + guanosine(34) in tRNA = 7-aminomethyl-7-carbaguanosine(34) in tRNA + guanine. It functions in the pathway tRNA modification; tRNA-queuosine biosynthesis. Catalyzes the base-exchange of a guanine (G) residue with the queuine precursor 7-aminomethyl-7-deazaguanine (PreQ1) at position 34 (anticodon wobble position) in tRNAs with GU(N) anticodons (tRNA-Asp, -Asn, -His and -Tyr). Catalysis occurs through a double-displacement mechanism. The nucleophile active site attacks the C1' of nucleotide 34 to detach the guanine base from the RNA, forming a covalent enzyme-RNA intermediate. The proton acceptor active site deprotonates the incoming PreQ1, allowing a nucleophilic attack on the C1' of the ribose to form the product. After dissociation, two additional enzymatic reactions on the tRNA convert PreQ1 to queuine (Q), resulting in the hypermodified nucleoside queuosine (7-(((4,5-cis-dihydroxy-2-cyclopenten-1-yl)amino)methyl)-7-deazaguanosine). This is Queuine tRNA-ribosyltransferase from Janthinobacterium sp. (strain Marseille) (Minibacterium massiliensis).